Here is a 115-residue protein sequence, read N- to C-terminus: NADH-ubiquinone oxidoreductase chain 3 (115 aa).

Transmembrane regions (helical) follow at residues 3–23 (LLLTLLTNTTLALLLVFIAFW), 55–75 (FFLVAITFLLFDLEIALLLPL), and 84–104 (LNTMLTMALFLISLLAASLAY).

Belongs to the complex I subunit 3 family. As to quaternary structure, core subunit of respiratory chain NADH dehydrogenase (Complex I) which is composed of 45 different subunits. Interacts with TMEM186. Interacts with TMEM242.

It is found in the mitochondrion inner membrane. It catalyses the reaction a ubiquinone + NADH + 5 H(+)(in) = a ubiquinol + NAD(+) + 4 H(+)(out). Its function is as follows. Core subunit of the mitochondrial membrane respiratory chain NADH dehydrogenase (Complex I) which catalyzes electron transfer from NADH through the respiratory chain, using ubiquinone as an electron acceptor. Essential for the catalytic activity of complex I. This chain is NADH-ubiquinone oxidoreductase chain 3, found in Balaenoptera musculus (Blue whale).